The sequence spans 234 residues: Proteasome subunit alpha type-2 (234 aa).

At alanine 2 the chain carries N-acetylalanine. Tyrosine 121 carries the post-translational modification Phosphotyrosine.

This sequence belongs to the peptidase T1A family. The 26S proteasome consists of a 20S proteasome core and two 19S regulatory subunits. The 20S proteasome core is a barrel-shaped complex made of 28 subunits that are arranged in four stacked rings. The two outer rings are each formed by seven alpha subunits, and the two inner rings are formed by seven beta subunits. The proteolytic activity is exerted by three beta-subunits PSMB5, PSMB6 and PSMB7.

It is found in the cytoplasm. The protein localises to the nucleus. Its function is as follows. Component of the 20S core proteasome complex involved in the proteolytic degradation of most intracellular proteins. This complex plays numerous essential roles within the cell by associating with different regulatory particles. Associated with two 19S regulatory particles, forms the 26S proteasome and thus participates in the ATP-dependent degradation of ubiquitinated proteins. The 26S proteasome plays a key role in the maintenance of protein homeostasis by removing misfolded or damaged proteins that could impair cellular functions, and by removing proteins whose functions are no longer required. Associated with the PA200 or PA28, the 20S proteasome mediates ubiquitin-independent protein degradation. This type of proteolysis is required in several pathways including spermatogenesis (20S-PA200 complex) or generation of a subset of MHC class I-presented antigenic peptides (20S-PA28 complex). In Xenopus laevis (African clawed frog), this protein is Proteasome subunit alpha type-2 (psma2).